The following is a 485-amino-acid chain: Ribosomal protein uS12 methylthiotransferase RimO (485 aa).

The MTTase N-terminal domain maps to serine 37–proline 147. The [4Fe-4S] cluster site is built by cysteine 46, cysteine 82, cysteine 111, cysteine 179, cysteine 183, and cysteine 186. Residues leucine 165–alanine 402 enclose the Radical SAM core domain. One can recognise a TRAM domain in the interval lysine 405 to glutamate 471.

This sequence belongs to the methylthiotransferase family. RimO subfamily. The cofactor is [4Fe-4S] cluster.

The protein resides in the cytoplasm. The catalysed reaction is L-aspartate(89)-[ribosomal protein uS12]-hydrogen + (sulfur carrier)-SH + AH2 + 2 S-adenosyl-L-methionine = 3-methylsulfanyl-L-aspartate(89)-[ribosomal protein uS12]-hydrogen + (sulfur carrier)-H + 5'-deoxyadenosine + L-methionine + A + S-adenosyl-L-homocysteine + 2 H(+). Functionally, catalyzes the methylthiolation of an aspartic acid residue of ribosomal protein uS12. The sequence is that of Ribosomal protein uS12 methylthiotransferase RimO from Alteromonas mediterranea (strain DSM 17117 / CIP 110805 / LMG 28347 / Deep ecotype).